The chain runs to 496 residues: Probable 26S proteasome non-ATPase regulatory subunit 3 (496 aa).

Residues 249 to 428 form the PCI domain; that stretch reads ARFLYYLGRI…GYMRSKESTD (180 aa). Residues 458–480 form a disordered region; sequence RYPPKSYGKELESAEERREREQQ. The span at 464–480 shows a compositional bias: basic and acidic residues; that stretch reads YGKELESAEERREREQQ.

The protein belongs to the proteasome subunit S3 family. As to quaternary structure, the 26S proteasome is composed of a core protease, known as the 20S proteasome, capped at one or both ends by the 19S regulatory complex (RC). The RC is composed of at least 18 different subunits in two subcomplexes, the base and the lid, which form the portions proximal and distal to the 20S proteolytic core, respectively.

Acts as a regulatory subunit of the 26 proteasome which is involved in the ATP-dependent degradation of ubiquitinated proteins. This chain is Probable 26S proteasome non-ATPase regulatory subunit 3 (Dox-A2), found in Anopheles gambiae (African malaria mosquito).